Reading from the N-terminus, the 381-residue chain is MSQNTDSPVLSLAKDLISRQSVTPLDEGCQQLMADRLADAGFNIESMVFEDTTNMWARRGTQSPVFCFAGHTDVVPVGDLNRWHTPPFEPVVIDDYLHGRGAADMKGSLAAMLVATERFIKKFPDHQGSIAFLITSDEEGPFINGTTRVIDTLEARNEKITWSLVGEPSSTHKLGDIVKNGRRGSLTGNLTVKGVQGHVAYPHLADNPIHKAAPALDELARMKWDNGNEFFPPTSFQIANINGGTGASNVIPGALEVMFNFRYSTEVTAEILIERVLNILDAHGLEYDIDWVFNGLPFLTGDGPLLEATKAAIKKVTGTNTDPQTSGGTSDGRFIAPTGAQVIELGPVNATIHKVNECVKVSDLELLTDCYEAILENLLCK.

His71 contributes to the Zn(2+) binding site. Asp73 is an active-site residue. Residue Asp104 participates in Zn(2+) binding. Residue Glu138 is the Proton acceptor of the active site. Residues Glu139, Glu167, and His353 each contribute to the Zn(2+) site.

The protein belongs to the peptidase M20A family. DapE subfamily. In terms of assembly, homodimer. Zn(2+) serves as cofactor. It depends on Co(2+) as a cofactor.

The catalysed reaction is N-succinyl-(2S,6S)-2,6-diaminopimelate + H2O = (2S,6S)-2,6-diaminopimelate + succinate. Its pathway is amino-acid biosynthesis; L-lysine biosynthesis via DAP pathway; LL-2,6-diaminopimelate from (S)-tetrahydrodipicolinate (succinylase route): step 3/3. In terms of biological role, catalyzes the hydrolysis of N-succinyl-L,L-diaminopimelic acid (SDAP), forming succinate and LL-2,6-diaminopimelate (DAP), an intermediate involved in the bacterial biosynthesis of lysine and meso-diaminopimelic acid, an essential component of bacterial cell walls. The chain is Succinyl-diaminopimelate desuccinylase from Shewanella halifaxensis (strain HAW-EB4).